The primary structure comprises 241 residues: Acetoacetyl-CoA reductase (241 aa).

NADP(+) contacts are provided by residues Arg12–Ile14 and Asn82–Thr86. Substrate is bound by residues Asp88 and Gln141–Gln144. Tyr147 acts as the Proton acceptor in catalysis. Pro177–Ile180 serves as a coordination point for NADP(+). Gly178 to Tyr179 is a substrate binding site.

This sequence belongs to the short-chain dehydrogenases/reductases (SDR) family.

It is found in the cytoplasm. It carries out the reaction a (3R)-3-hydroxyacyl-CoA + NADP(+) = a 3-oxoacyl-CoA + NADPH + H(+). The protein operates within biopolymer metabolism; poly-(R)-3-hydroxybutanoate biosynthesis. This chain is Acetoacetyl-CoA reductase, found in Shinella zoogloeoides (Crabtreella saccharophila).